The chain runs to 224 residues: Thiamine-phosphate synthase (224 aa).

4-amino-2-methyl-5-(diphosphooxymethyl)pyrimidine contacts are provided by residues 44–48 (QFREK) and Asn79. Mg(2+)-binding residues include Asp80 and Asp99. Ser117 is a binding site for 4-amino-2-methyl-5-(diphosphooxymethyl)pyrimidine. 143–145 (TET) contacts 2-[(2R,5Z)-2-carboxy-4-methylthiazol-5(2H)-ylidene]ethyl phosphate. Lys146 provides a ligand contact to 4-amino-2-methyl-5-(diphosphooxymethyl)pyrimidine. Residues Gly175 and 195-196 (IS) each bind 2-[(2R,5Z)-2-carboxy-4-methylthiazol-5(2H)-ylidene]ethyl phosphate.

The protein belongs to the thiamine-phosphate synthase family. Requires Mg(2+) as cofactor.

The enzyme catalyses 2-[(2R,5Z)-2-carboxy-4-methylthiazol-5(2H)-ylidene]ethyl phosphate + 4-amino-2-methyl-5-(diphosphooxymethyl)pyrimidine + 2 H(+) = thiamine phosphate + CO2 + diphosphate. It catalyses the reaction 2-(2-carboxy-4-methylthiazol-5-yl)ethyl phosphate + 4-amino-2-methyl-5-(diphosphooxymethyl)pyrimidine + 2 H(+) = thiamine phosphate + CO2 + diphosphate. It carries out the reaction 4-methyl-5-(2-phosphooxyethyl)-thiazole + 4-amino-2-methyl-5-(diphosphooxymethyl)pyrimidine + H(+) = thiamine phosphate + diphosphate. Its pathway is cofactor biosynthesis; thiamine diphosphate biosynthesis; thiamine phosphate from 4-amino-2-methyl-5-diphosphomethylpyrimidine and 4-methyl-5-(2-phosphoethyl)-thiazole: step 1/1. Its function is as follows. Condenses 4-methyl-5-(beta-hydroxyethyl)thiazole monophosphate (THZ-P) and 2-methyl-4-amino-5-hydroxymethyl pyrimidine pyrophosphate (HMP-PP) to form thiamine monophosphate (TMP). In Bacillus velezensis (strain DSM 23117 / BGSC 10A6 / LMG 26770 / FZB42) (Bacillus amyloliquefaciens subsp. plantarum), this protein is Thiamine-phosphate synthase.